A 449-amino-acid polypeptide reads, in one-letter code: Hyaluronidase-1 (449 aa).

The signal sequence occupies residues 1–23 (MYHLWIKCLAAWIFLKRCNGVHA). Intrachain disulfides connect C47/C340 and C211/C227. N-linked (GlcNAc...) asparagine glycosylation is found at N67, N103, and N111. E135 (proton donor) is an active-site residue. The N-linked (GlcNAc...) asparagine glycan is linked to N153. Residue N357 is glycosylated (N-linked (GlcNAc...) asparagine). Cystine bridges form between C365/C376, C370/C427, and C429/C438. N-linked (GlcNAc...) asparagine glycosylation occurs at N401. The region spanning 427-438 (CQCYQGWKGLYC) is the EGF-like domain.

This sequence belongs to the glycosyl hydrolase 56 family. In terms of assembly, monomer. As to expression, expressed by the venom gland.

Its subcellular location is the secreted. The enzyme catalyses Random hydrolysis of (1-&gt;4)-linkages between N-acetyl-beta-D-glucosamine and D-glucuronate residues in hyaluronate.. Snake venom endo-hyaluronidase that degrades hyaluronan to smaller oligosaccharide fragments. In venom, it is not toxic by itself, but increases the diffusion of other venom proteins by degrading the extracellular matrix. In addition, it displays antiedematogenic activity. The protein is Hyaluronidase-1 of Bitis arietans (African puff adder).